The primary structure comprises 776 residues: Protein translocase subunit SecA 2 (776 aa).

ATP-binding positions include Gln80, 98–102, and Asp486; that span reads GEGKT.

This sequence belongs to the SecA family. Monomer and homodimer. Part of the essential Sec protein translocation apparatus which comprises SecA, SecYEG and auxiliary proteins SecDF. Other proteins may also be involved.

It is found in the cell membrane. It localises to the cytoplasm. The catalysed reaction is ATP + H2O + cellular proteinSide 1 = ADP + phosphate + cellular proteinSide 2.. Functionally, part of the Sec protein translocase complex. Interacts with the SecYEG preprotein conducting channel. Has a central role in coupling the hydrolysis of ATP to the transfer of proteins into and across the cell membrane, serving as an ATP-driven molecular motor driving the stepwise translocation of polypeptide chains across the membrane. In Listeria monocytogenes serovar 1/2a (strain ATCC BAA-679 / EGD-e), this protein is Protein translocase subunit SecA 2.